A 293-amino-acid polypeptide reads, in one-letter code: 33 kDa chaperonin (293 aa).

Cystine bridges form between C230–C232 and C263–C266.

It belongs to the HSP33 family. Under oxidizing conditions two disulfide bonds are formed involving the reactive cysteines. Under reducing conditions zinc is bound to the reactive cysteines and the protein is inactive.

The protein resides in the cytoplasm. Functionally, redox regulated molecular chaperone. Protects both thermally unfolding and oxidatively damaged proteins from irreversible aggregation. Plays an important role in the bacterial defense system toward oxidative stress. The sequence is that of 33 kDa chaperonin from Edwardsiella ictaluri (strain 93-146).